A 214-amino-acid chain; its full sequence is Methyltransferase HEMK2 (214 aa).

S-adenosyl-L-homocysteine-binding residues include Thr29, Glu51, Gly53, Asp77, Asp103, Leu104, and Asn122. Positions 29, 51, 53, 77, 103, 104, and 122 each coordinate S-adenosyl-L-methionine. Residue Asn122 coordinates a protein.

The protein belongs to the eukaryotic/archaeal PrmC-related family. As to quaternary structure, heterodimer; heterodimerization with TRMT112 is required for S-adenosyl-L-methionine-binding. In terms of assembly, does not interact with TRMT112. Post-translationally, ubiquitinated, leading to its degradation by the proteasome. As to expression, widely expressed, with highest expression in parathyroid and pituitary glands, followed by adrenal gland and kidney, and lowest expression in leukocytes and mammary gland.

Its subcellular location is the nucleus. The enzyme catalyses L-lysyl-[histone] + S-adenosyl-L-methionine = N(6)-methyl-L-lysyl-[histone] + S-adenosyl-L-homocysteine + H(+). It catalyses the reaction L-glutaminyl-[protein] + S-adenosyl-L-methionine = N(5)-methyl-L-glutaminyl-[protein] + S-adenosyl-L-homocysteine + H(+). The catalysed reaction is methylarsonous acid + S-adenosyl-L-methionine = dimethylarsinate + S-adenosyl-L-homocysteine + 2 H(+). Functionally, methyltransferase that can methylate proteins and, to a lower extent, arsenic. Catalytic subunit of a heterodimer with TRMT112, which monomethylates 'Lys-12' of histone H4 (H4K12me1), a modification present at the promoters of numerous genes encoding cell cycle regulators. Catalytic subunit of a heterodimer with TRMT112, which catalyzes N5-methylation of Glu residue of proteins with a Gly-Gln-Xaa-Xaa-Xaa-Arg motif. Methylates ETF1 on 'Gln-185'; ETF1 needs to be complexed to ERF3 in its GTP-bound form to be efficiently methylated. May also play a role in the modulation of arsenic-induced toxicity by mediating the conversion of monomethylarsonous acid (3+) into the less toxic dimethylarsonic acid. It however only plays a limited role in arsenic metabolism compared with AS3MT. The protein is Methyltransferase HEMK2 of Homo sapiens (Human).